The primary structure comprises 98 residues: PE family immunomodulator PE35 (98 aa).

One can recognise a PE domain in the interval M1 to D90.

It belongs to the mycobacterial PE family. Interacts with PPE68. PE35/PPE68 complex interacts with human TLR2.

It is found in the secreted. The protein resides in the cell surface. Functionally, plays a major role in RD1-associated pathogenesis, and may contribute to the establishment and maintenance of M.tuberculosis infection. Together with PPE68, stimulates the secretion of IL-10 and MCP-1 from human macrophages, via the interaction with human Toll-like receptor 2 (TLR2). In Mycobacterium tuberculosis (strain CDC 1551 / Oshkosh), this protein is PE family immunomodulator PE35 (PE35).